A 161-amino-acid chain; its full sequence is Large ribosomal subunit protein uL30m (161 aa).

Residues 1–34 constitute a mitochondrion transit peptide; that stretch reads MAGILRLVVQWPPGRLQTVTKGVESLICTDWIRH.

Belongs to the universal ribosomal protein uL30 family. In terms of assembly, component of the mitochondrial large ribosomal subunit (mt-LSU). Mature mammalian 55S mitochondrial ribosomes consist of a small (28S) and a large (39S) subunit. The 28S small subunit contains a 12S ribosomal RNA (12S mt-rRNA) and 30 different proteins. The 39S large subunit contains a 16S rRNA (16S mt-rRNA), a copy of mitochondrial valine transfer RNA (mt-tRNA(Val)), which plays an integral structural role, and 52 different proteins.

It localises to the mitochondrion. The polypeptide is Large ribosomal subunit protein uL30m (MRPL30) (Homo sapiens (Human)).